Reading from the N-terminus, the 281-residue chain is NADH-cytochrome b5 reductase 1 (281 aa).

A helical transmembrane segment spans residues Val-2–Val-22. The FAD-binding FR-type domain maps to Glu-37 to Gln-141. FAD-binding positions include Ala-121–Gly-136 and Glu-147–Leu-179.

It belongs to the flavoprotein pyridine nucleotide cytochrome reductase family. Monomer. Component of the 2-(3-amino-3-carboxypropyl)histidine synthase complex composed of DPH1, DPH2, DPH3 and a NADH-dependent reductase, predominantly CBR1. FAD is required as a cofactor.

It localises to the mitochondrion outer membrane. The catalysed reaction is 2 Fe(III)-[cytochrome b5] + NADH = 2 Fe(II)-[cytochrome b5] + NAD(+) + H(+). It catalyses the reaction 2 Fe(3+)-[Dph3] + NADH = 2 Fe(2+)-[Dph3] + NAD(+) + H(+). The protein operates within protein modification; peptidyl-diphthamide biosynthesis. NADH-dependent reductase for DPH3 and cytochrome b5. Required for the first step of diphthamide biosynthesis, a post-translational modification of histidine which occurs in elongation factor 2. DPH1 and DPH2 transfer a 3-amino-3-carboxypropyl (ACP) group from S-adenosyl-L-methionine (SAM) to a histidine residue, the reaction is assisted by a reduction system comprising DPH3 and a NADH-dependent reductase, predominantly CBR1. By reducing DPH3, also involved in the formation of the tRNA wobble base modification mcm5s 2U (5-methoxycarbonylmethyl-2-thiouridine), mediated by the elongator complex. The cytochrome b5/NADH cytochrome b5 reductase electron transfer system supports the catalytic activity of several sterol biosynthetic enzymes. The protein is NADH-cytochrome b5 reductase 1 (CBR1) of Kluyveromyces lactis (strain ATCC 8585 / CBS 2359 / DSM 70799 / NBRC 1267 / NRRL Y-1140 / WM37) (Yeast).